The sequence spans 95 residues: Small ribosomal subunit protein uS17 (95 aa).

It belongs to the universal ribosomal protein uS17 family. In terms of assembly, part of the 30S ribosomal subunit.

In terms of biological role, one of the primary rRNA binding proteins, it binds specifically to the 5'-end of 16S ribosomal RNA. The sequence is that of Small ribosomal subunit protein uS17 from Psychrobacter sp. (strain PRwf-1).